We begin with the raw amino-acid sequence, 111 residues long: Somatostatin-1B (111 aa).

A signal peptide spans 1 to 19 (MQLLSSLVSLLLVLYSVRA). Residues 20–87 (AAVLPVEERN…RLEERAVYNR (68 aa)) constitute a propeptide that is removed on maturation. A disulfide bridge links C100 with C111.

This sequence belongs to the somatostatin family.

The protein resides in the secreted. Somatostatin inhibits the release of somatotropin. The polypeptide is Somatostatin-1B (sst1b) (Carassius auratus (Goldfish)).